We begin with the raw amino-acid sequence, 199 residues long: Cytochrome b (199 aa).

4 helical membrane-spanning segments follow: residues 1–8 (LTGLFLAM), 32–53 (WLIRNLHANGASFFFICIYFHI), 68–88 (WNIGVVLLLLVMMTAFVGYVL), and 133–153 (FFAFHFLFPFVILAMTILHLL). Heme b is bound by residues H38 and H52. H137 and H151 together coordinate heme b. An a ubiquinone-binding site is contributed by H156. The chain crosses the membrane as a helical span at residues 181–199 (YKDLLGFAILLVALASLAH).

Belongs to the cytochrome b family. In terms of assembly, the cytochrome bc1 complex contains 3 respiratory subunits (MT-CYB, CYC1 and UQCRFS1), 2 core proteins (UQCRC1 and UQCRC2) and probably 6 low-molecular weight proteins. The cofactor is heme b.

It localises to the mitochondrion inner membrane. Its function is as follows. Component of the ubiquinol-cytochrome c reductase complex (complex III or cytochrome b-c1 complex) that is part of the mitochondrial respiratory chain. The b-c1 complex mediates electron transfer from ubiquinol to cytochrome c. Contributes to the generation of a proton gradient across the mitochondrial membrane that is then used for ATP synthesis. The sequence is that of Cytochrome b (mt-cyb) from Sarda chiliensis (Pacific bonito).